A 49-amino-acid chain; its full sequence is Defensin-like protein 1 (49 aa).

4 cysteine pairs are disulfide-bonded: C3–C49, C14–C35, C20–C43, and C24–C45.

This sequence belongs to the DEFL family.

The protein localises to the secreted. Functionally, possesses antimicrobial activity sensitive to inorganic cations. Binds specifically to the fungal plasma membrane. Has no inhibitory effect on insect gut alpha-amylase. The sequence is that of Defensin-like protein 1 from Clitoria ternatea (Butterfly pea).